A 155-amino-acid chain; its full sequence is Deoxyuridine 5'-triphosphate nucleotidohydrolase (155 aa).

Substrate contacts are provided by residues 75 to 77, Asn88, and 92 to 94; these read RSG and TVD.

Belongs to the dUTPase family. The cofactor is Mg(2+).

It carries out the reaction dUTP + H2O = dUMP + diphosphate + H(+). The protein operates within pyrimidine metabolism; dUMP biosynthesis; dUMP from dCTP (dUTP route): step 2/2. In terms of biological role, this enzyme is involved in nucleotide metabolism: it produces dUMP, the immediate precursor of thymidine nucleotides and it decreases the intracellular concentration of dUTP so that uracil cannot be incorporated into DNA. The polypeptide is Deoxyuridine 5'-triphosphate nucleotidohydrolase (Caulobacter vibrioides (strain ATCC 19089 / CIP 103742 / CB 15) (Caulobacter crescentus)).